The chain runs to 550 residues: Glucose-6-phosphate isomerase (550 aa).

Residue glutamate 356 is the Proton donor of the active site. Catalysis depends on residues histidine 387 and lysine 515.

It belongs to the GPI family.

The protein resides in the cytoplasm. It catalyses the reaction alpha-D-glucose 6-phosphate = beta-D-fructose 6-phosphate. It participates in carbohydrate biosynthesis; gluconeogenesis. The protein operates within carbohydrate degradation; glycolysis; D-glyceraldehyde 3-phosphate and glycerone phosphate from D-glucose: step 2/4. Catalyzes the reversible isomerization of glucose-6-phosphate to fructose-6-phosphate. The sequence is that of Glucose-6-phosphate isomerase from Vibrio parahaemolyticus serotype O3:K6 (strain RIMD 2210633).